A 776-amino-acid chain; its full sequence is Protein SEY1 (776 aa).

Residues 1–681 lie on the Cytoplasmic side of the membrane; sequence MADRSAIQLI…KRSIITTRTH (681 aa). The GB1/RHD3-type G domain occupies 34-263; it reads GLDYHVISVF…TENYYFKPQY (230 aa). Residue 44–51 coordinates GTP; sequence GSQSSGKS. The chain crosses the membrane as a helical span at residues 682–702; it reads IPPWIYVLLAVLGWNEFVAVI. Topologically, residues 703–705 are lumenal; sequence RNP. A helical membrane pass occupies residues 706–726; the sequence is LFVTLTLILGATFFVIHKFGL. At 727 to 776 the chain is on the cytoplasmic side; it reads WGPVVNVVQSAVGETRTAIKDKLRQFVVEDHEVKESFEMKDFSKNEQKEK.

This sequence belongs to the TRAFAC class dynamin-like GTPase superfamily. GB1/RHD3 GTPase family. RHD3 subfamily. In terms of assembly, interacts with RTN1 and YOP1; GTP binding is not required for these interactions.

The protein resides in the endoplasmic reticulum membrane. Functionally, cooperates with the reticulon proteins RTN1 and RTN2 and the tubule-shaping DP1 family protein YOP1 to generate and maintain the structure of the tubular endoplasmic reticulum network. Has GTPase activity, which is required for its function in ER organization. The protein is Protein SEY1 of Saccharomyces cerevisiae (strain YJM789) (Baker's yeast).